We begin with the raw amino-acid sequence, 216 residues long: Corrinoid protein DSY3155 (216 aa).

Residues 1-90 (MIMSLLDELK…EIAKKGMSEG (90 aa)) form the B12-binding N-terminal domain. The 124-residue stretch at 93-216 (KGKIVLGTVE…VELANKILGK (124 aa)) folds into the B12-binding domain. His-106 contributes to the methylcob(III)alamin binding site.

This sequence belongs to the methylamine corrinoid protein family.

Probably harbors a corrinoid prosthetic group and acts as a methyl group carrier between MtgB and MtgA. A methyl group from glycine betaine is likely first transferred to the corrinoid prosthetic group of the enzyme by MtgB, and then transferred to tetrahydrofolate (THF) by MtgA. The methyl group may then be ultimately converted to carbon dioxide, and its oxidation would also provide reducing equivalents for anaerobic respiration. Thus, may function in the pathway that allows anaerobic methylotrophic growth of D.hafniense using glycine betaine. This Desulfitobacterium hafniense (strain Y51) protein is Corrinoid protein DSY3155.